The following is a 129-amino-acid chain: Large ribosomal subunit protein bL20 (129 aa).

The protein belongs to the bacterial ribosomal protein bL20 family.

Its function is as follows. Binds directly to 23S ribosomal RNA and is necessary for the in vitro assembly process of the 50S ribosomal subunit. It is not involved in the protein synthesizing functions of that subunit. This Mycobacterium tuberculosis (strain ATCC 25177 / H37Ra) protein is Large ribosomal subunit protein bL20.